The following is a 67-amino-acid chain: Putative ATP synthase subunit epsilon, mitochondrial (67 aa).

Belongs to the eukaryotic ATPase epsilon family. F-type ATPases have 2 components, CF(1) - the catalytic core - and CF(0) - the membrane proton channel. CF(1) has five subunits: alpha(3), beta(3), gamma(1), delta(1), epsilon(1). CF(0) seems to have nine subunits: a, b, c, d, e, f, g, F6 and 8 (or A6L).

Its subcellular location is the mitochondrion. The protein resides in the mitochondrion inner membrane. Mitochondrial membrane ATP synthase (F(1)F(0) ATP synthase or Complex V) produces ATP from ADP in the presence of a proton gradient across the membrane which is generated by electron transport complexes of the respiratory chain. F-type ATPases consist of two structural domains, F(1) - containing the extramembraneous catalytic core, and F(0) - containing the membrane proton channel, linked together by a central stalk and a peripheral stalk. During catalysis, ATP synthesis in the catalytic domain of F(1) is coupled via a rotary mechanism of the central stalk subunits to proton translocation. Part of the complex F(1) domain and of the central stalk which is part of the complex rotary element. Rotation of the central stalk against the surrounding alpha(3)beta(3) subunits leads to hydrolysis of ATP in three separate catalytic sites on the beta subunits. The sequence is that of Putative ATP synthase subunit epsilon, mitochondrial (atp15) from Schizosaccharomyces pombe (strain 972 / ATCC 24843) (Fission yeast).